The following is a 110-amino-acid chain: uncharacterized protein (110 aa).

It is found in the mitochondrion. This is an uncharacterized protein from Arabidopsis thaliana (Mouse-ear cress).